We begin with the raw amino-acid sequence, 984 residues long: Ephrin type-B receptor 1 (984 aa).

The Eph LBD domain maps to 1-182; that stretch reads ETLMDTRTAT…FFKKCPSVVQ (182 aa). Residues 1–541 lie on the Extracellular side of the membrane; it reads ETLMDTRTAT…KSELREQLPL (541 aa). 2 Fibronectin type-III domains span residues 303–413 and 414–528; these read VPSG…TNQA and APST…TLTD. N-linked (GlcNAc...) asparagine glycosylation is found at Asn315, Asn407, and Asn480. A helical transmembrane segment spans residues 542-562; it reads IAGSAAAGVVFIVSLVAISIV. Residues 563–984 are Cytoplasmic-facing; sequence CSRKRAYSKE…QMSQSPTSMA (422 aa). Residues 619-882 form the Protein kinase domain; sequence VKIEEVIGAG…EIVNTLDKMI (264 aa). ATP contacts are provided by residues 625 to 633 and Lys651; that span reads IGAGEFGEV. Asp744 acts as the Proton acceptor in catalysis. An SAM domain is found at 911-975; the sequence is TAFTSVEDWL…LNSIQSMRVQ (65 aa). A PDZ-binding motif is present at residues 982 to 984; the sequence is SMA.

Belongs to the protein kinase superfamily. Tyr protein kinase family. Ephrin receptor subfamily. As to quaternary structure, heterotetramer upon binding of the ligand. The heterotetramer is composed of an ephrin dimer and a receptor dimer. Oligomerization is probably required to induce biological responses. In terms of processing, phosphorylated. Autophosphorylation is stimulated by ligands. As to expression, expressed at high levels in the 10-day embryo, and in adult brain, lung, heart and skeletal muscle. Low levels of expression detected in all other adult tissues tested.

Its subcellular location is the cell membrane. It is found in the early endosome membrane. The protein resides in the cell projection. The protein localises to the dendrite. The enzyme catalyses L-tyrosyl-[protein] + ATP = O-phospho-L-tyrosyl-[protein] + ADP + H(+). In terms of biological role, receptor tyrosine kinase which binds promiscuously transmembrane ephrin-B family ligands residing on adjacent cells, leading to contact-dependent bidirectional signaling into neighboring cells. The signaling pathway downstream of the receptor is referred to as forward signaling while the signaling pathway downstream of the ephrin ligand is referred to as reverse signaling. May play a role in axon guidance during nervous system development. May also play an important redundant role with other ephrin-B receptors in development and maturation of dendritic spines and synapse formation. More generally, may play a role in targeted cell migration and adhesion. Upon activation by ephrin-B ligands activates the MAPK/ERK and the JNK signaling cascades to regulate cell migration and adhesion respectively. This chain is Ephrin type-B receptor 1 (EPHB1), found in Gallus gallus (Chicken).